Consider the following 84-residue polypeptide: Metallothionein type 2b (84 aa).

The protein belongs to the metallothionein superfamily. Type 15 family. In terms of tissue distribution, expressed in leaves, stems and roots.

Its subcellular location is the cytoplasm. It localises to the nucleus. Metallothioneins have a high content of cysteine residues that bind various heavy metals. Probably involved in maintaining homeostasis of essential transition metals and detoxification of toxic metals. Increases cadmium and zinc tolerance when expressed in heterologous systems. Metal chelator binding 6 cadmium or 5 zinc atoms per protein. This Colocasia esculenta (Wild taro) protein is Metallothionein type 2b.